The primary structure comprises 534 residues: Dolichol kinase (534 aa).

Residues 1-16 (MTRQCPPQESGAALSG) are Cytoplasmic-facing. Residues 17–37 (SVLAEAAVVFAVVLSIHAAVW) traverse the membrane as a helical segment. The Extracellular portion of the chain corresponds to 38 to 72 (DRYSWCAVALAVQAFYVQYKWDRLLQQGNAVFQFR). Residues 73–93 (MSANSGLLPASMVMPLLGLVM) traverse the membrane as a helical segment. The Cytoplasmic segment spans residues 94 to 109 (KERCQTAGNPYFERFG). Residues 110–130 (IVVAATGMAVALFSSVLALGI) traverse the membrane as a helical segment. Residues 131-132 (TR) lie on the Extracellular side of the membrane. Residues 133 to 153 (PVPTNTCAISGLAGGVIIYIM) form a helical membrane-spanning segment. Over 154-161 (RHSLSVGE) the chain is Cytoplasmic. The chain crosses the membrane as a helical span at residues 162 to 182 (VIEVLEVLLIFVYLNMILLYL). Over 183-186 (LPRC) the chain is Extracellular. Residues 187–207 (FTPGEALLVLGGISFVLNQLI) traverse the membrane as a helical segment. Residues 208–220 (KRSLTESQGDPVD) lie on the Cytoplasmic side of the membrane. A helical transmembrane segment spans residues 221 to 241 (FFLLVVVVGMVLMGVFFSTLF). The Extracellular portion of the chain corresponds to 242 to 252 (VFMDSGTWASS). A helical membrane pass occupies residues 253–273 (IFFHLMTCVLGLGVVLPWLHW). Residues 274 to 293 (LIRRNPLLWLLQFLFYTETR) lie on the Cytoplasmic side of the membrane. A helical membrane pass occupies residues 294–314 (IYLLAYWSLLASVACLVVLYQ). Topologically, residues 315-333 (NAKRSSSESKKHRAPTITR) are extracellular. The helical transmembrane segment at 334 to 350 (KYFHFIVVATYIPGIIF) threads the bilayer. Over 351–355 (DRPLL) the chain is Cytoplasmic. A helical transmembrane segment spans residues 356–376 (YVAATVCLAVFIFLEYVRYFR). Topologically, residues 377–397 (IKPLGHTLRSLLSLFLDERDS) are extracellular. A helical membrane pass occupies residues 398 to 418 (GPLILTHIYLLLGMSLPIWLI). Residues 419 to 432 (PRPCTQKDSLEGAR) are Cytoplasmic-facing. The helical transmembrane segment at 433-453 (ALVPYAGVLAVGVGDTVASIF) threads the bilayer. Residues 454-468 (GSTMGEIRWPGTKKT) lie on the Extracellular side of the membrane. Residues 455–470 (STMGEIRWPGTKKTFE) form a CTP-binding region. The helical transmembrane segment at 469 to 489 (FEGTMTSIFAQIISVALILIF) threads the bilayer. Over 490–491 (DS) the chain is Cytoplasmic. Residues 492-512 (GVDLNYSYAWILGSISTVSLL) traverse the membrane as a helical segment. The Extracellular portion of the chain corresponds to 513 to 534 (EAYTTQIDNLLLPLYLLILLMA).

The protein belongs to the polyprenol kinase family.

Its subcellular location is the endoplasmic reticulum membrane. It catalyses the reaction a di-trans,poly-cis-dolichol + CTP = a di-trans,poly-cis-dolichyl phosphate + CDP + H(+). It functions in the pathway protein modification; protein glycosylation. Functionally, catalyzes CTP-mediated phosphorylation of dolichol, the terminal step in de novo dolichyl monophosphate (Dol-P) biosynthesis. Dol-P is a lipid carrier essential for the synthesis of N-linked and O-linked oligosaccharides and for GPI anchors. In Mus musculus (Mouse), this protein is Dolichol kinase.